The chain runs to 215 residues: MKSSNLYSKLLNAPKNAPVFLSQNLEADFIVKAYTFGLFPWTSKPVTWWCPDPRCILIPNQIHIQKNMKKFINLYQIKLDYDFLKLITLCRDTRSQSWIDDEFITTYYKLFTQGYAHSLELYENNELIGGIYGLILGKVFFGESMVSIKKNASKVAMIKLCDLLKPYDFIIDCQVYNQHLEFMGAHNISRKEFLNILKEKCNQESGFKNFKDLIT.

Belongs to the L/F-transferase family.

The protein localises to the cytoplasm. The enzyme catalyses N-terminal L-lysyl-[protein] + L-leucyl-tRNA(Leu) = N-terminal L-leucyl-L-lysyl-[protein] + tRNA(Leu) + H(+). It catalyses the reaction N-terminal L-arginyl-[protein] + L-leucyl-tRNA(Leu) = N-terminal L-leucyl-L-arginyl-[protein] + tRNA(Leu) + H(+). It carries out the reaction L-phenylalanyl-tRNA(Phe) + an N-terminal L-alpha-aminoacyl-[protein] = an N-terminal L-phenylalanyl-L-alpha-aminoacyl-[protein] + tRNA(Phe). Functionally, functions in the N-end rule pathway of protein degradation where it conjugates Leu, Phe and, less efficiently, Met from aminoacyl-tRNAs to the N-termini of proteins containing an N-terminal arginine or lysine. This Campylobacter jejuni subsp. jejuni serotype O:2 (strain ATCC 700819 / NCTC 11168) protein is Leucyl/phenylalanyl-tRNA--protein transferase.